The sequence spans 234 residues: Small ribosomal subunit protein eS4 (234 aa).

The 62-residue stretch at isoleucine 38–arginine 99 folds into the S4 RNA-binding; degenerate domain.

The protein belongs to the eukaryotic ribosomal protein eS4 family.

This is Small ribosomal subunit protein eS4 (rps4e) from Picrophilus torridus (strain ATCC 700027 / DSM 9790 / JCM 10055 / NBRC 100828 / KAW 2/3).